Consider the following 29-residue polypeptide: MHVSTFQALMLMLAFGSFIIALLTYIKKK.

Residues 6–26 form a helical membrane-spanning segment; sequence FQALMLMLAFGSFIIALLTYI.

Its subcellular location is the cell membrane. Possible toxic component of a type I toxin-antitoxin (TA) system; an overlapping antisense RNA has been identified. This chain is Probable small toxic protein BsrH, found in Bacillus subtilis (strain 168).